Here is a 266-residue protein sequence, read N- to C-terminus: Hydroxyacylglutathione hydrolase (266 aa).

Positions 53, 55, 57, 58, 118, 140, and 178 each coordinate Zn(2+).

It belongs to the metallo-beta-lactamase superfamily. Glyoxalase II family. In terms of assembly, monomer. Zn(2+) is required as a cofactor.

It catalyses the reaction an S-(2-hydroxyacyl)glutathione + H2O = a 2-hydroxy carboxylate + glutathione + H(+). It participates in secondary metabolite metabolism; methylglyoxal degradation; (R)-lactate from methylglyoxal: step 2/2. Its function is as follows. Thiolesterase that catalyzes the hydrolysis of S-D-lactoyl-glutathione to form glutathione and D-lactic acid. The chain is Hydroxyacylglutathione hydrolase from Cupriavidus taiwanensis (strain DSM 17343 / BCRC 17206 / CCUG 44338 / CIP 107171 / LMG 19424 / R1) (Ralstonia taiwanensis (strain LMG 19424)).